The primary structure comprises 151 residues: Transcriptional regulator MraZ (151 aa).

SpoVT-AbrB domains follow at residues 5–52 (ANAI…PLDE) and 81–124 (AVDL…DEDA).

The protein belongs to the MraZ family. As to quaternary structure, forms oligomers.

It is found in the cytoplasm. The protein resides in the nucleoid. The polypeptide is Transcriptional regulator MraZ (Pseudomonas fluorescens (strain SBW25)).